A 482-amino-acid chain; its full sequence is tRNA sulfurtransferase (482 aa).

One can recognise a THUMP domain in the interval leucine 61 to arginine 165. Residues leucine 183–isoleucine 184, lysine 265, glycine 287, and glutamine 296 each bind ATP. Cysteine 344 and cysteine 456 are disulfide-bonded. The Rhodanese domain occupies cysteine 404 to proline 482. The Cysteine persulfide intermediate role is filled by cysteine 456.

It belongs to the ThiI family.

The protein resides in the cytoplasm. It catalyses the reaction [ThiI sulfur-carrier protein]-S-sulfanyl-L-cysteine + a uridine in tRNA + 2 reduced [2Fe-2S]-[ferredoxin] + ATP + H(+) = [ThiI sulfur-carrier protein]-L-cysteine + a 4-thiouridine in tRNA + 2 oxidized [2Fe-2S]-[ferredoxin] + AMP + diphosphate. It carries out the reaction [ThiS sulfur-carrier protein]-C-terminal Gly-Gly-AMP + S-sulfanyl-L-cysteinyl-[cysteine desulfurase] + AH2 = [ThiS sulfur-carrier protein]-C-terminal-Gly-aminoethanethioate + L-cysteinyl-[cysteine desulfurase] + A + AMP + 2 H(+). The protein operates within cofactor biosynthesis; thiamine diphosphate biosynthesis. Catalyzes the ATP-dependent transfer of a sulfur to tRNA to produce 4-thiouridine in position 8 of tRNAs, which functions as a near-UV photosensor. Also catalyzes the transfer of sulfur to the sulfur carrier protein ThiS, forming ThiS-thiocarboxylate. This is a step in the synthesis of thiazole, in the thiamine biosynthesis pathway. The sulfur is donated as persulfide by IscS. The chain is tRNA sulfurtransferase from Shigella dysenteriae serotype 1 (strain Sd197).